The primary structure comprises 244 residues: MATIGRETTISWLGHGTFHILTPGGKKVLIDAWVDGNPSCPDEWKQRVRSEGLDVIFLTHGHFDHIADILALANETSATIVGQFDITSWIASKGVSQDRLVGFNKGGTVEVAGIRATMTHATHSSTFTDNGVIVPMGTEAGYVLRMENGFTIYHTGDTAVTMDMQIIGDLYHPELVILPIGDHFTMDPMQAAYALKLIRPTFAIPEHYGTFPILRGTPDQLREQCNAFGVNVTVIDLKPGESVS.

This sequence belongs to the UPF0173 family.

This chain is UPF0173 metal-dependent hydrolase RoseRS_3945, found in Roseiflexus sp. (strain RS-1).